The sequence spans 786 residues: Cyclin-F (786 aa).

The Nuclear localization signal 1 signature appears at 20-28; it reads KRRIRRRPR. Residues 29 to 76 enclose the F-box domain; the sequence is NLTILSLPEDVLFHILKWLSVEDILAVRAVHSQLKDLVDNHASVWACA. Positions 288 to 405 constitute a Cyclin N-terminal domain; that stretch reads QASQAVSKQQ…EIVSALEGKI (118 aa). 4 consecutive short sequence motifs (d box) follow at residues 310–313, 343–346, 349–352, and 351–354; these read RYIL, RRRL, RYRL, and RLQL. Disordered stretches follow at residues 564–593 and 675–738; these read SPSGRRTKRKRENSLQEDRGSFVTTPTAEL and TQIP…HTQP. Residues 568–574 carry the Nuclear localization signal 2 motif; sequence RRTKRKR. A PEST region spans residues 582 to 766; that stretch reads RGSFVTTPTA…ESSVPQQQVK (185 aa). Low complexity predominate over residues 697 to 714; the sequence is VTTSGYSSVSTASPTSSV. Positions 723–738 are enriched in polar residues; that stretch reads QPTSVLSLDSDSHTQP. The D box 5 motif lies at 767 to 770; sequence RINL.

This sequence belongs to the cyclin family. Cyclin AB subfamily. Component of the SCF(CCNF) complex consisting of CUL1, RBX1, SKP1 and CCNF. Interacts with SKP1. Interacts with CUL1. Interacts with CCNB1; interaction is required for nuclear localization of CCNB1. Interacts with CCP110; this interaction leads to CCP110 ubiquitination and degradation via the proteasome pathway. Interacts (via the Cyclin N-terminal domain) with MYBL2/BMYB. Interacts with FZR1/CDH1 (via N-terminus). Interacts with RRM2 (via Cy motif and when phosphorylated at 'Thr-33'); the interaction occurs exclusively in G2 and early M. Interacts with CDC6 (via Cy motif); the interaction takes place during G2 and M phase. In terms of processing, degraded when the spindle assembly checkpoint is activated during the G2-M transition. Degradation depends on the C-terminal PEST sequence. Phosphorylated just before cells enter into mitosis. Post-translationally, ubiquitinated by the anaphase-promoting complex (APC/C); leading to its degradation by the proteasome. In terms of tissue distribution, widely expressed, with expression detected in the heart, brain, placenta, lung, liver, skeletal muscle, kidney and pancreas.

The protein localises to the nucleus. The protein resides in the cytoplasm. It localises to the perinuclear region. Its subcellular location is the cytoskeleton. It is found in the microtubule organizing center. The protein localises to the centrosome. The protein resides in the centriole. Functionally, substrate recognition component of a SCF (SKP1-CUL1-F-box protein) E3 ubiquitin-protein ligase complex which mediates the ubiquitination and subsequent proteasomal degradation of target proteins. The SCF(CCNF) E3 ubiquitin-protein ligase complex is an integral component of the ubiquitin proteasome system (UPS) and links proteasome degradation to the cell cycle. Mediates the substrate recognition and the proteasomal degradation of various target proteins involved in the regulation of cell cycle progression and in the maintenance of genome stability. Mediates the ubiquitination and proteasomal degradation of CP110 during G2 phase, thereby acting as an inhibitor of centrosome reduplication. In G2, mediates the ubiquitination and subsequent degradation of ribonucleotide reductase RRM2, thereby maintaining a balanced pool of dNTPs and genome integrity. In G2, mediates the ubiquitination and proteasomal degradation of CDC6, thereby suppressing DNA re-replication and preventing genome instability. Involved in the ubiquitination and degradation of the substrate adapter CDH1 of the anaphase-promoting complex (APC/C), thereby acting as an antagonist of APC/C in regulating G1 progression and S phase entry. May play a role in the G2 cell cycle checkpoint control after DNA damage, possibly by promoting the ubiquitination of MYBL2/BMYB. In Homo sapiens (Human), this protein is Cyclin-F (CCNF).